Consider the following 190-residue polypeptide: Glutathione peroxidase 2 (190 aa).

The active site involves U40. Residue U40 is a non-standard amino acid, selenocysteine.

Belongs to the glutathione peroxidase family. As to quaternary structure, homotetramer.

Its subcellular location is the cytoplasm. The protein localises to the cytosol. It carries out the reaction 2 glutathione + H2O2 = glutathione disulfide + 2 H2O. The enzyme catalyses a hydroperoxy polyunsaturated fatty acid + 2 glutathione = a hydroxy polyunsaturated fatty acid + glutathione disulfide + H2O. It catalyses the reaction tert-butyl hydroperoxide + 2 glutathione = tert-butanol + glutathione disulfide + H2O. The catalysed reaction is cumene hydroperoxide + 2 glutathione = 2-phenylpropan-2-ol + glutathione disulfide + H2O. It carries out the reaction (13S)-hydroperoxy-(9Z,11E)-octadecadienoate + 2 glutathione = (13S)-hydroxy-(9Z,11E)-octadecadienoate + glutathione disulfide + H2O. The enzyme catalyses (5S)-hydroperoxy-(6E,8Z,11Z,14Z)-eicosatetraenoate + 2 glutathione = (5S)-hydroxy-(6E,8Z,11Z,14Z)-eicosatetraenoate + glutathione disulfide + H2O. It catalyses the reaction (12R)-hydroperoxy-(5Z,8Z,10E,14Z)-eicosatetraenoate + 2 glutathione = (12R)-hydroxy-(5Z,8Z,10E,14Z)-eicosatetraenoate + glutathione disulfide + H2O. The catalysed reaction is (15S)-hydroperoxy-(5Z,8Z,11Z,13E)-eicosatetraenoate + 2 glutathione = (15S)-hydroxy-(5Z,8Z,11Z,13E)-eicosatetraenoate + glutathione disulfide + H2O. Its function is as follows. Catalyzes the reduction of hydroperoxides in a glutathione-dependent manner thus regulating cellular redox homeostasis. Can reduce small soluble hydroperoxides such as H2O2, cumene hydroperoxide and tert-butyl hydroperoxide, as well as several fatty acid-derived hydroperoxides. Cannot reduce phosphatidycholine hydroperoxide. This is Glutathione peroxidase 2 (GPX2) from Sapajus apella (Brown-capped capuchin).